A 424-amino-acid polypeptide reads, in one-letter code: Type II methyltransferase M.XorII (424 aa).

One can recognise an SAM-dependent MTase C5-type domain in the interval 4 to 367 (PIGIDLFAGA…GQIMKALRKK (364 aa)). C83 is an active-site residue. The disordered stretch occupies residues 404 to 424 (RSRPVDRPAPRRHEERELVTA). Residues 406–424 (RPVDRPAPRRHEERELVTA) are compositionally biased toward basic and acidic residues.

This sequence belongs to the class I-like SAM-binding methyltransferase superfamily. C5-methyltransferase family.

It catalyses the reaction a 2'-deoxycytidine in DNA + S-adenosyl-L-methionine = a 5-methyl-2'-deoxycytidine in DNA + S-adenosyl-L-homocysteine + H(+). In terms of biological role, a methylase that recognizes the double-stranded sequence 5'-CGATCG-3', methylates C-? on both strands and protects the DNA from cleavage by the XorII endonuclease. This chain is Type II methyltransferase M.XorII (xorIIM), found in Xanthomonas oryzae pv. oryzae (strain KACC10331 / KXO85).